An 882-amino-acid polypeptide reads, in one-letter code: Exo-beta-D-glucosaminidase ARB_07888 (882 aa).

Residues 1–21 (MWFVFRPAAIPALLLTLGVSA) form the signal peptide. Residues 22 to 31 (LSPLRPLVST) constitute a propeptide that is removed on maturation. N-linked (GlcNAc...) asparagine glycosylation is found at N86, N200, N234, N237, N287, and N442. The active-site Proton donor is D466. Residue E538 is the Nucleophile of the active site. Residues N688, N773, and N816 are each glycosylated (N-linked (GlcNAc...) asparagine).

It belongs to the glycosyl hydrolase 2 family. As to quaternary structure, monomer.

The protein resides in the secreted. It carries out the reaction Hydrolysis of chitosan or chitosan oligosaccharides to remove successive D-glucosamine residues from the non-reducing termini.. Functionally, hydrolyzes chitosan and chitooligosaccharides with retention of anomeric configuration. This Arthroderma benhamiae (strain ATCC MYA-4681 / CBS 112371) (Trichophyton mentagrophytes) protein is Exo-beta-D-glucosaminidase ARB_07888.